The primary structure comprises 291 residues: AA14 family lytic polysaccharide monooxygenase (291 aa).

A signal peptide spans 1–17 (MLTTAILFTSLAGSAYA). The N-linked (GlcNAc...) asparagine glycan is linked to N141. 3 cysteine pairs are disulfide-bonded: C192-C197, C199-C220, and C240-C247.

It belongs to the polysaccharide monooxygenase AA14 family. It depends on Cu(2+) as a cofactor.

The protein resides in the secreted. In terms of biological role, lytic polysaccharide monooxygenase (LPMO) that is active against heteroxylan, xyloglucan and cellulose in beta-cellulose and released native oligosaccharides and corresponding C1- and/or C4-oxidized products. May act mainly on heteroxylan with numerous arabinosyl substituents between cellulose fibers rather than on recalcitrant xylan tightly associated with cellulose. Catalysis by LPMOs requires the reduction of the active-site copper from Cu(II) to Cu(I) by a reducing agent and H(2)O(2) or O(2) as a cosubstrate. Shows a branched chain preference, and has synergistic effects with the Penicillium parvum debranching enzyme ABF62C in an enzyme- and ascorbic acid-dependent manner. Also has synergistic effects with the Penicillium parvum GH10 endoxylanase XYN1, and the degree of synergy was greater with step-by-step addition than with simultaneous addition. This chain is AA14 family lytic polysaccharide monooxygenase, found in Sordaria brevicollis.